Consider the following 245-residue polypeptide: Thioredoxin-like 1-2, chloroplastic (245 aa).

Residues 1 to 92 (MDAISSLGTN…TNHNMLEIQS (92 aa)) constitute a chloroplast transit peptide. The Thioredoxin domain occupies 93 to 194 (ANHLVDSLLN…FKKALDKHGS (102 aa)). Active-site nucleophile residues include Cys117 and Cys120. Cys117 and Cys120 are disulfide-bonded.

It belongs to the thioredoxin family.

The protein resides in the plastid. The protein localises to the chloroplast. Functionally, probable thiol-disulfide oxidoreductase that may participate in various redox reactions. The polypeptide is Thioredoxin-like 1-2, chloroplastic (Arabidopsis thaliana (Mouse-ear cress)).